A 67-amino-acid polypeptide reads, in one-letter code: Alpha-toxin Tf3 (67 aa).

Positions 2–63 constitute an LCN-type CS-alpha/beta domain; that stretch reads KDGYPVEGDN…EPTKTNGRCK (62 aa). 4 disulfide bridges follow: Cys12–Cys62, Cys16–Cys38, Cys24–Cys45, and Cys28–Cys47. Residue Pro64 is modified to Proline amide.

It belongs to the long (4 C-C) scorpion toxin superfamily. Sodium channel inhibitor family. Alpha subfamily. In terms of tissue distribution, expressed by the venom gland.

The protein localises to the secreted. Alpha toxins bind voltage-independently at site-3 of sodium channels (Nav) and inhibit the inactivation of the activated channels, thereby blocking neuronal transmission. This is Alpha-toxin Tf3 from Tityus fasciolatus (Central Brazilian scorpion).